The following is a 342-amino-acid chain: Oxygen-dependent coproporphyrinogen-III oxidase (342 aa).

Ser-98 is a substrate binding site. His-102 and His-112 together coordinate a divalent metal cation. His-112 serves as the catalytic Proton donor. 114 to 116 (NYR) is a substrate binding site. His-146 and His-176 together coordinate a divalent metal cation. An important for dimerization region spans residues 266–301 (YVEFNLVWDRGTIFGLQTNGRTESILMSLPPLARWE).

It belongs to the aerobic coproporphyrinogen-III oxidase family. Homodimer. A divalent metal cation serves as cofactor.

It localises to the cytoplasm. It carries out the reaction coproporphyrinogen III + O2 + 2 H(+) = protoporphyrinogen IX + 2 CO2 + 2 H2O. It participates in porphyrin-containing compound metabolism; protoporphyrin-IX biosynthesis; protoporphyrinogen-IX from coproporphyrinogen-III (O2 route): step 1/1. Functionally, involved in the heme and chlorophyll biosynthesis. Catalyzes the aerobic oxidative decarboxylation of propionate groups of rings A and B of coproporphyrinogen-III to yield the vinyl groups in protoporphyrinogen-IX. The chain is Oxygen-dependent coproporphyrinogen-III oxidase from Prochlorococcus marinus subsp. pastoris (strain CCMP1986 / NIES-2087 / MED4).